We begin with the raw amino-acid sequence, 31 residues long: Cytochrome b6-f complex subunit 8 (31 aa).

A helical transmembrane segment spans residues isoleucine 5–valine 25.

The protein belongs to the PetN family. As to quaternary structure, the 4 large subunits of the cytochrome b6-f complex are cytochrome b6, subunit IV (17 kDa polypeptide, PetD), cytochrome f and the Rieske protein, while the 4 small subunits are PetG, PetL, PetM and PetN. The complex functions as a dimer.

It is found in the plastid. The protein localises to the chloroplast thylakoid membrane. Functionally, component of the cytochrome b6-f complex, which mediates electron transfer between photosystem II (PSII) and photosystem I (PSI), cyclic electron flow around PSI, and state transitions. The protein is Cytochrome b6-f complex subunit 8 of Acorus calamus (Sweet flag).